A 190-amino-acid polypeptide reads, in one-letter code: UPF0340 protein BC_5317 (190 aa).

This sequence belongs to the UPF0340 family.

This is UPF0340 protein BC_5317 from Bacillus cereus (strain ATCC 14579 / DSM 31 / CCUG 7414 / JCM 2152 / NBRC 15305 / NCIMB 9373 / NCTC 2599 / NRRL B-3711).